A 526-amino-acid polypeptide reads, in one-letter code: Delayed-rectifier potassium channel regulatory subunit KCNS1 (526 aa).

Topologically, residues 1–217 (MLMLLVRGTH…LTMENPGYSL (217 aa)) are cytoplasmic. The helical transmembrane segment at 218–239 (PSKLFSCVSISVVLASIAAMCI) threads the bilayer. At 240–270 (HSLPEYQAREAAAAVAAVAAGRSPEGVRDDP) the chain is on the extracellular side. Residues 271 to 293 (VLRRLEYFCIAWFSFEVSSRLLL) form a helical membrane-spanning segment. Over 294–304 (APSTRNFFCHP) the chain is Cytoplasmic. A helical transmembrane segment spans residues 305–322 (LNLIDIVSVLPFYLTLLA). Residues 323–337 (GVALGDQGGKEFGHL) are Extracellular-facing. Residues 338–358 (GKVVQVFRLMRIFRVLKLARH) form a helical; Voltage-sensor membrane-spanning segment. Over 359–373 (STGLRSLGATLKHSY) the chain is Cytoplasmic. A helical transmembrane segment spans residues 374–395 (REVGILLLYLAVGVSVFSGVAY). Residues 396 to 408 (TAEKEEDVGFNTI) lie on the Extracellular side of the membrane. Positions 409-420 (PACWWWGTVSMT) form an intramembrane region, helical. The Selectivity filter motif lies at 421–426 (TVGYGD). An intramembrane segment occupies 421-428 (TVGYGDVV). The Extracellular segment spans residues 429 to 435 (PVTVAGK). Residues 436 to 464 (LAASGCILGGILVVALPITIIFNKFSHFY) traverse the membrane as a helical segment. Over 465-526 (RRQKALEAAV…PSEPPHPQRY (62 aa)) the chain is Cytoplasmic. The tract at residues 492–526 (VSEASLETSGETSQEGRSADLESQAPSEPPHPQRY) is disordered. The segment covering 496-507 (SLETSGETSQEG) has biased composition (polar residues).

The protein belongs to the potassium channel family. S (TC 1.A.1.2) subfamily. Kv9.1/KCNS1 sub-subfamily. As to quaternary structure, heterotetramer with KCNB1. Heterotetramer with KCNB2. Does not form homomultimers.

It localises to the cell membrane. Potassium channel regulatory subunit that modulate the delayed rectifier voltage-gated potassium channel activity of KCNB1 and KCNB2 by altering their kinetics, expression levels, and shifting the half-inactivation potential to more polarized values. While it does not form functional channels on its own, it can form functional heterotetrameric channels with KCNB1 and KCNB2. Each regulatory subunit has unique regulatory properties that can lead to extensive inhibition, significant changes in kinetics, and/or substantial shifts in the voltage dependencies of the inactivation process. This is Delayed-rectifier potassium channel regulatory subunit KCNS1 from Gorilla gorilla gorilla (Western lowland gorilla).